Here is a 270-residue protein sequence, read N- to C-terminus: UPF0354 protein BCE_4835 (270 aa).

The protein belongs to the UPF0354 family.

The polypeptide is UPF0354 protein BCE_4835 (Bacillus cereus (strain ATCC 10987 / NRS 248)).